Reading from the N-terminus, the 287-residue chain is Small ribosomal subunit biogenesis GTPase RsgA (287 aa).

The region spanning S61–L218 is the CP-type G domain. GTP is bound by residues N110–D113 and G161–T169. Positions 242, 247, 249, and 255 each coordinate Zn(2+).

It belongs to the TRAFAC class YlqF/YawG GTPase family. RsgA subfamily. In terms of assembly, monomer. Associates with 30S ribosomal subunit, binds 16S rRNA. The cofactor is Zn(2+).

It localises to the cytoplasm. In terms of biological role, one of several proteins that assist in the late maturation steps of the functional core of the 30S ribosomal subunit. Helps release RbfA from mature subunits. May play a role in the assembly of ribosomal proteins into the subunit. Circularly permuted GTPase that catalyzes slow GTP hydrolysis, GTPase activity is stimulated by the 30S ribosomal subunit. The chain is Small ribosomal subunit biogenesis GTPase RsgA from Clostridium perfringens (strain 13 / Type A).